The sequence spans 1072 residues: E3 ubiquitin-protein ligase RNF31 (1072 aa).

The interval 1 to 485 (MPGEEEERAF…PEKQRQDKMR (485 aa)) is polyubiquitin-binding. The PUB domain maps to 71 to 142 (TLSTALNILE…SFPEGQEEPD (72 aa)). Residues 263-290 (QGTHLSPSLPASAQPRPQSTSLLALGDS) form a disordered region. Polar residues predominate over residues 265–280 (THLSPSLPASAQPRPQ). The segment covering 281–290 (STSLLALGDS) has biased composition (low complexity). 2 consecutive RanBP2-type zinc fingers follow at residues 299 to 329 (SAHL…PRGC) and 350 to 379 (ARGR…PRLA). Serine 383 carries the post-translational modification Phosphoserine. The RanBP2-type 3 zinc finger occupies 409-438 (QSQVWYCIHCTFCNSSPGWVCVMCNRTSSP). Residues 443 to 484 (HAPRPYASSLEKGPPKPGPPRRLSAPLPSSCGDPEKQRQDKM) are disordered. Residues 463 to 472 (RRLSAPLPSS) are compositionally biased toward low complexity. Serine 466 carries the phosphoserine modification. Basic and acidic residues predominate over residues 475–484 (DPEKQRQDKM). The tract at residues 563–616 (GNLDEAVEECVRTRRRKVQELQSLGFGPEEGSLQALFQHGGDVSRALTELQRQR) is interaction with RBCK1. A UBA domain is found at 564–615 (NLDEAVEECVRTRRRKVQELQSLGFGPEEGSLQALFQHGGDVSRALTELQRQ). Residues 695 to 929 (LAQECAVCGW…KSLHGHHPRD (235 aa)) are TRIAD supradomain. Residues cysteine 699, cysteine 702, cysteine 717, cysteine 719, cysteine 722, and cysteine 725 each coordinate Zn(2+). An RING-type 1 zinc finger spans residues 699–749 (CAVCGWALPHNRMQALTSCECTICPDCFRQHFTIALKEKHITDMVCPACGR). Residue lysine 735 forms a (Microbial infection) Glycyl lysine isopeptide (Lys-Gly) (interchain with G-Cter in ubiquitin) linkage. Residues cysteine 744 and cysteine 747 each coordinate Zn(2+). Residues 779-841 (ALFHKKLTEG…WEEQHRGRSC (63 aa)) form an IBR-type zinc finger. Residue lysine 783 forms a (Microbial infection) Glycyl lysine isopeptide (Lys-Gly) (interchain with G-Cter in ubiquitin) linkage. Residues cysteine 799, cysteine 802, cysteine 817, cysteine 820, cysteine 825, cysteine 828, histidine 836, cysteine 841, cysteine 871, and cysteine 874 each coordinate Zn(2+). An RING-type 2; atypical zinc finger spans residues 871 to 901 (CPKCKFSYALARGGCMHFHCTQCRHQFCSGC). Lysine 875 is covalently cross-linked ((Microbial infection) Glycyl lysine isopeptide (Lys-Gly) (interchain with G-Cter in ubiquitin)). Cysteine 885 is a catalytic residue. Positions 890, 893, 898, 901, 916, and 925 each coordinate Zn(2+). The interval 910 to 1072 (KCPEPNCRVK…LGQSIPRRRK (163 aa)) is LDD domain.

The protein belongs to the RBR family. Component of the LUBAC complex (linear ubiquitin chain assembly complex) which consists of SHARPIN, RBCK1 and RNF31. LUBAC has a MW of approximately 600 kDa suggesting a heteromultimeric assembly of its subunits. Associates with the TNF-R1 signaling complex (TNF-RSC) in a stimulation-dependent manner. Interacts (via the PUB domain) with OTULIN (via the PIM motif); the interaction is direct. Interacts (via the PUB domain) with VCP (via the PIM motif). Interacts (via the PUB domain) with SPATA2 (via the PIM motif); interaction is direct and bridges RNF31 and CYLD. Interacts with CYLD; the interaction is indirect and is mediated via SPATA2. Interacts with MUSK. Interacts with CARD11, promoting linear ubiquitination of BCL10. As to quaternary structure, (Microbial infection) Interacts with S.flexneri E3 ubiquitin-protein ligases IpaH1.4 and IpaH2.5, leading to its ubiquitination. Autoubiquitinated. Interaction with OTULIN is required to suppress formation of 'Met-1'-linked polyubiquitin chains and prevent subsequent inactivation of the LUBAC complex. In terms of processing, cleaved by caspase during apoptosis. Post-translationally, (Microbial infection) Ubiquitinated by S.flexneri E3 ubiquitin-protein ligases IpaH1.4 and IpaH2.5, leading to its degradation by the proteasome, thereby preventing formation of the bacterial ubiquitin coat and activation of innate immunity. Expressed in both normal and transformed breast epithelial cell lines.

It is found in the cytoplasm. The enzyme catalyses [E2 ubiquitin-conjugating enzyme]-S-ubiquitinyl-L-cysteine + [acceptor protein]-L-lysine = [E2 ubiquitin-conjugating enzyme]-L-cysteine + [acceptor protein]-N(6)-ubiquitinyl-L-lysine.. It participates in protein modification; protein ubiquitination. Its function is as follows. E3 ubiquitin-protein ligase component of the LUBAC complex which conjugates linear ('Met-1'-linked) polyubiquitin chains to substrates and plays a key role in NF-kappa-B activation and regulation of inflammation. LUBAC conjugates linear polyubiquitin to IKBKG and RIPK1 and is involved in activation of the canonical NF-kappa-B and the JNK signaling pathways. Linear ubiquitination mediated by the LUBAC complex interferes with TNF-induced cell death and thereby prevents inflammation. LUBAC is recruited to the TNF-R1 signaling complex (TNF-RSC) following polyubiquitination of TNF-RSC components by BIRC2 and/or BIRC3 and to conjugate linear polyubiquitin to IKBKG and possibly other components contributing to the stability of the complex. The LUBAC complex is also involved in innate immunity by conjugating linear polyubiquitin chains at the surface of bacteria invading the cytosol to form the ubiquitin coat surrounding bacteria. LUBAC is not able to initiate formation of the bacterial ubiquitin coat, and can only promote formation of linear polyubiquitins on pre-existing ubiquitin. Recruited to the surface of bacteria by RNF213, which initiates the bacterial ubiquitin coat. The bacterial ubiquitin coat acts as an 'eat-me' signal for xenophagy and promotes NF-kappa-B activation. Together with OTULIN, the LUBAC complex regulates the canonical Wnt signaling during angiogenesis. RNF31 is required for linear ubiquitination of BCL10, thereby promoting TCR-induced NF-kappa-B activation. Binds polyubiquitin of different linkage types. In Homo sapiens (Human), this protein is E3 ubiquitin-protein ligase RNF31.